Here is a 507-residue protein sequence, read N- to C-terminus: Probable Xaa-Pro aminopeptidase ARB_01886 (507 aa).

The Mn(2+) site is built by aspartate 275, aspartate 286, glutamate 434, and glutamate 478.

The protein belongs to the peptidase M24B family. Requires Mn(2+) as cofactor.

It carries out the reaction Release of any N-terminal amino acid, including proline, that is linked to proline, even from a dipeptide or tripeptide.. Its function is as follows. Catalyzes the removal of a penultimate prolyl residue from the N-termini of peptides. This Arthroderma benhamiae (strain ATCC MYA-4681 / CBS 112371) (Trichophyton mentagrophytes) protein is Probable Xaa-Pro aminopeptidase ARB_01886.